The sequence spans 319 residues: Glycine--tRNA ligase alpha subunit (319 aa).

It belongs to the class-II aminoacyl-tRNA synthetase family. Tetramer of two alpha and two beta subunits.

Its subcellular location is the cytoplasm. It catalyses the reaction tRNA(Gly) + glycine + ATP = glycyl-tRNA(Gly) + AMP + diphosphate. The sequence is that of Glycine--tRNA ligase alpha subunit from Coxiella burnetii (strain CbuK_Q154) (Coxiella burnetii (strain Q154)).